A 713-amino-acid chain; its full sequence is Topoisomerase subunit TopoM (713 aa).

The region spanning 41-504 (IPSAYDGLKP…DATPVSRGDE (464 aa)) is the Topo IIA-type catalytic domain. The active-site O-(5'-phospho-DNA)-tyrosine intermediate is tyrosine 128. Residues 694-713 (NRAKASIKGSGADVTPAPAE) are disordered.

The protein belongs to the type II topoisomerase GyrA/ParC subunit family. As to quaternary structure, a complex of TopoN and TopoM, possibly a heterotetramer. Requires Mg(2+) as cofactor.

The enzyme catalyses ATP-dependent breakage, passage and rejoining of double-stranded DNA.. Inhibited by quinolone antibiotic ciprofloxacin and coumarin antibiotic novobiocin, but at much higher concentrations than is usual for DNA gyrase/topoisomerase. Catalyzes the relaxation of negatively supercoiled DNA in the presence of ATP or dATP but not other nucleotides. Individual subunits have no activity. Not able to negatively supercoil DNA, it can however introduce positive supercoils in DNA. Relaxes positive supercoils in an ATP-dependent manner. Catenates and decatenates DNA. Generates dsDNA breaks in the presence of the quinolone antibiotic ciprofloxacin, showing it is a topoisomerase. The chain is Topoisomerase subunit TopoM from Mycolicibacterium smegmatis (strain ATCC 700084 / mc(2)155) (Mycobacterium smegmatis).